Consider the following 139-residue polypeptide: Asp-hemolysin (139 aa).

A propeptide spanning residues 1-5 is cleaved from the precursor; that stretch reads MASVQ. Residues 47 to 79 form a disordered region; that stretch reads TSEDVQQKTAPPGGSVNVNSCGRSDASSGTTGG. Residues 62–75 show a composition bias toward polar residues; it reads VNVNSCGRSDASSG.

Belongs to the aegerolysin family.

The sequence is that of Asp-hemolysin from Aspergillus fumigatus (strain ATCC MYA-4609 / CBS 101355 / FGSC A1100 / Af293) (Neosartorya fumigata).